The primary structure comprises 917 residues: DNA topoisomerase 1 beta (917 aa).

The tract at residues 1-368 (MATEAFVKPV…SLPSGDGQKK (368 aa)) is disordered. Over residues 32 to 63 (RNSNTAATTNRPSPINNAMRNSAIGSTKSSPP) the composition is skewed to polar residues. Low complexity predominate over residues 66–82 (SPLTSPNRSASSSTRSS). The span at 89–100 (PSSSSVQRSTLK) shows a compositional bias: polar residues. Composition is skewed to basic and acidic residues over residues 102-116 (PLRDDRSVVAKERNG) and 134-149 (DKPLSARLKLDSKEVT). Residues 150-170 (KQPSSSGRGSTQQAVQKSNMR) show a composition bias toward polar residues. Over residues 177–187 (YTKKKVLDERA) the composition is skewed to basic and acidic residues. Polar residues predominate over residues 189-205 (MSSTVQTKTSVGTSSSK). Composition is skewed to basic and acidic residues over residues 256 to 265 (KLSEPARPVK) and 296 to 307 (VKEDNSDGDDHV). A Phosphoserine modification is found at Ser-301. The span at 316–338 (DSSNNKSSSAKPSSSKMIASSSR) shows a compositional bias: low complexity. 3 interaction with DNA regions span residues 575–576 (KY), 638–643 (RAGNEK), and 729–731 (TAK). In terms of domain architecture, Topo IB-type catalytic spans 582–912 (SSSLKGQSDK…MDVDPEFRFC (331 aa)). Residues 779–858 (VSKSHGAQVE…ERDMQTKEDM (80 aa)) are a coiled coil. Catalysis depends on Tyr-870, which acts as the O-(3'-phospho-DNA)-tyrosine intermediate.

This sequence belongs to the type IB topoisomerase family.

Its subcellular location is the nucleus. It carries out the reaction ATP-independent breakage of single-stranded DNA, followed by passage and rejoining.. Functionally, releases the supercoiling and torsional tension of DNA introduced during the DNA replication and transcription by transiently cleaving and rejoining one strand of the DNA duplex. Introduces a single-strand break via transesterification at a target site in duplex DNA. The scissile phosphodiester is attacked by the catalytic tyrosine of the enzyme, resulting in the formation of a DNA-(3'-phosphotyrosyl)-enzyme intermediate and the expulsion of a 5'-OH DNA strand. The free DNA strand then rotates around the intact phosphodiester bond on the opposing strand, thus removing DNA supercoils. Finally, in the religation step, the DNA 5'-OH attacks the covalent intermediate to expel the active-site tyrosine and restore the DNA phosphodiester backbone. Topoisomerases 1 enzymes (TOP1A and TOP1B) are essential for plant survival. This Arabidopsis thaliana (Mouse-ear cress) protein is DNA topoisomerase 1 beta.